A 267-amino-acid polypeptide reads, in one-letter code: MTDQRRNVYFFHKQDQETNEQARSLTQLAEEHGFTVVNQHSDANIIASIGGDGTFLQAVRKTNFRDDCLYVGITKKGKAHLYCDFHSDEREKMVDAMTFEQIEVRKYPLIEVTVDQASPFHCLNEVSIRSSIIKTFVMDVLIDDLHFETFRGDGMIISTPTGSTAYNKSVAGAVVDPLLPCMQVSELASLNNNTYRTLGSPFVLSSDRKLTLRVVQDGNEHPIIGLDNEALSTRNVKTIEIKLSNKKIKTVKLKDNSFWEKVKRTFL.

Asp-52 acts as the Proton acceptor in catalysis. NAD(+) is bound by residues Asp-52–Gly-53, Asn-124–Glu-125, Arg-151, Asp-153, Thr-164–Ser-169, and Ala-188.

It belongs to the NAD kinase family. A divalent metal cation is required as a cofactor.

Its subcellular location is the cytoplasm. It catalyses the reaction NAD(+) + ATP = ADP + NADP(+) + H(+). Its function is as follows. Involved in the regulation of the intracellular balance of NAD and NADP, and is a key enzyme in the biosynthesis of NADP. Catalyzes specifically the phosphorylation on 2'-hydroxyl of the adenosine moiety of NAD to yield NADP. In Bacillus subtilis (strain 168), this protein is NAD kinase 2.